The following is an 827-amino-acid chain: Lon protease 2 (827 aa).

The segment at 1 to 22 (MSDEKKKGSAASAMPTAMAPPG) is disordered. Low complexity predominate over residues 9–21 (SAASAMPTAMAPP). In terms of domain architecture, Lon N-terminal spans 33–227 (LPILPLRNSV…LVLELLNRKR (195 aa)). 379 to 386 (GPPGVGKT) provides a ligand contact to ATP. A Lon proteolytic domain is found at 615–796 (TEVPGVATGL…DDVLKAALET (182 aa)). Active-site residues include Ser702 and Lys745. Residues 799-827 (VGVAGTPGGEPGKEAPLPKPAESAPEVRA) are disordered.

This sequence belongs to the peptidase S16 family. Homohexamer. Organized in a ring with a central cavity.

It localises to the cytoplasm. The enzyme catalyses Hydrolysis of proteins in presence of ATP.. Its function is as follows. ATP-dependent serine protease that mediates the selective degradation of mutant and abnormal proteins as well as certain short-lived regulatory proteins. Required for cellular homeostasis and for survival from DNA damage and developmental changes induced by stress. Degrades polypeptides processively to yield small peptide fragments that are 5 to 10 amino acids long. Binds to DNA in a double-stranded, site-specific manner. This chain is Lon protease 2, found in Myxococcus xanthus.